The chain runs to 189 residues: Phosphomevalonate kinase (189 aa).

Residues 10 to 16 (KRKCGKD) and R138 contribute to the ATP site. N168 is a binding site for substrate.

The protein resides in the cytoplasm. The protein localises to the cytosol. It catalyses the reaction (R)-5-phosphomevalonate + ATP = (R)-5-diphosphomevalonate + ADP. It participates in isoprenoid biosynthesis; isopentenyl diphosphate biosynthesis via mevalonate pathway; isopentenyl diphosphate from (R)-mevalonate: step 2/3. This chain is Phosphomevalonate kinase, found in Drosophila melanogaster (Fruit fly).